Here is a 960-residue protein sequence, read N- to C-terminus: Cyclin-dependent kinase-like 5 (960 aa).

Residues 13–297 (FEILGVVGEG…TEQCLNHPTF (285 aa)) enclose the Protein kinase domain. ATP-binding positions include 19 to 27 (VGEGAYGVV) and K42. The active-site Proton acceptor is D135. 4 disordered regions span residues 300 to 349 (QRLL…IQNL), 382 to 566 (KTYQ…RHSK), 646 to 834 (SPQP…TQSQ), and 848 to 960 (ASNH…ETAL). Polar residues-rich tracts occupy residues 319 to 336 (ESSTLSNRNQAGKSTALQ) and 382 to 402 (KTYQASSQPGSTSKDLTNNNI). Phosphoserine is present on S407. Basic and acidic residues predominate over residues 407–417 (SPKEAKSKTEF). Composition is skewed to polar residues over residues 434 to 462 (LKSNSRSQQNRHSFMESSQSKAGTLQPNE), 473 to 482 (IPQSSRSPSY), and 510 to 548 (EPSTSRYFPSSCLDLNSPTSPTPTRHSDTRTLLSPSGRN). Residue S479 is modified to Phosphoserine. Basic and acidic residues-rich tracts occupy residues 549–559 (NRNEGTLDSRR) and 679–704 (QKSEGGVYHDPHSDDGTAPKENRHLY). Position 720 is a phosphoserine (S720). The span at 728 to 748 (HENNVSTRVSSLPSESSSGTN) shows a compositional bias: polar residues. At S761 the chain carries Phosphoserine. A compositionally biased stretch (basic and acidic residues) spans 769–778 (EQLKEKEKQG). The segment covering 791-816 (QTVPNSDSPDLLTLQKSIHSASTPSS) has biased composition (polar residues). Over residues 817–827 (RPKEWRPEKIS) the composition is skewed to basic and acidic residues. 3 stretches are compositionally biased toward polar residues: residues 862 to 872 (LTAQQTKNSFS), 880 to 890 (SQASGGSSNIR), and 914 to 928 (SSVTRSATEGPSYSE).

The protein belongs to the protein kinase superfamily. CMGC Ser/Thr protein kinase family. CDC2/CDKX subfamily. In terms of assembly, interacts with MECP2. In terms of processing, autophosphorylated. Expressed in brain, lung, kidney, prostate, ovary, placenta, pancreas and testis. As to expression, predominant transcript in brain.

The protein localises to the nucleus. Its subcellular location is the cytoplasm. The protein resides in the cytoskeleton. It is found in the cilium basal body. It localises to the microtubule organizing center. The protein localises to the centrosome. It catalyses the reaction L-seryl-[protein] + ATP = O-phospho-L-seryl-[protein] + ADP + H(+). The enzyme catalyses L-threonyl-[protein] + ATP = O-phospho-L-threonyl-[protein] + ADP + H(+). Functionally, mediates phosphorylation of MECP2. May regulate ciliogenesis. This Homo sapiens (Human) protein is Cyclin-dependent kinase-like 5.